The primary structure comprises 69 residues: Beta-defensin 1 (69 aa).

The first 21 residues, 1–21 (MKTHYFLLVMLFFLFSQMELG), serve as a signal peptide directing secretion. A propeptide spanning residues 22 to 32 (AGILTSLGRRT) is cleaved from the precursor. Cystine bridges form between cysteine 37–cysteine 66, cysteine 44–cysteine 59, and cysteine 49–cysteine 67.

Belongs to the beta-defensin family. As to quaternary structure, monomer. Homodimer. In terms of tissue distribution, highly expressed in kidney.

The protein resides in the secreted. Its subcellular location is the membrane. In terms of biological role, has bactericidal activity. May act as a ligand for C-C chemokine receptor CCR6. Positively regulates the sperm motility and bactericidal activity in a CCR6-dependent manner. Binds to CCR6 and triggers Ca2+ mobilization in the sperm which is important for its motility. This is Beta-defensin 1 (Defb1) from Rattus norvegicus (Rat).